We begin with the raw amino-acid sequence, 285 residues long: Glycine--tRNA ligase alpha subunit (285 aa).

This sequence belongs to the class-II aminoacyl-tRNA synthetase family. In terms of assembly, tetramer of two alpha and two beta subunits.

It localises to the cytoplasm. The enzyme catalyses tRNA(Gly) + glycine + ATP = glycyl-tRNA(Gly) + AMP + diphosphate. The chain is Glycine--tRNA ligase alpha subunit from Thermodesulfovibrio yellowstonii (strain ATCC 51303 / DSM 11347 / YP87).